The chain runs to 812 residues: DNA translocase FtsK 1 (812 aa).

Residues 1–11 (MTEKSHKKTAK) show a composition bias toward basic residues. The disordered stretch occupies residues 1–36 (MTEKSHKKTAKGRAGSPSPTSARNKKADNGARGNKV). Basic and acidic residues predominate over residues 25 to 36 (KKADNGARGNKV). 5 consecutive transmembrane segments (helical) span residues 63-83 (IGDALWLMGLAATLYLVISLI), 116-136 (VGYYLFGWSFWWWIAAACVML), 156-176 (IAAAALFVLTVFSPVLEYFVL), 184-204 (LPVGAGGMVGIRVGAVFAWLL), and 210-230 (LLIILVVLLLSLSLLVQISWL). The Cytoplasmic segment spans residues 231–812 (EFLNGAGRAV…RKILAHKDHL (582 aa)). A FtsK domain is found at 461–670 (GTPVVGDLAK…FTVQSKIDSR (210 aa)). 481–486 (GSGKSV) is an ATP binding site.

This sequence belongs to the FtsK/SpoIIIE/SftA family. In terms of assembly, homohexamer. Forms a ring that surrounds DNA.

It is found in the cell inner membrane. Its function is as follows. Essential cell division protein that coordinates cell division and chromosome segregation. The N-terminus is involved in assembly of the cell-division machinery. The C-terminus functions as a DNA motor that moves dsDNA in an ATP-dependent manner towards the dif recombination site, which is located within the replication terminus region. Translocation stops specifically at Xer-dif sites, where FtsK interacts with the Xer recombinase, allowing activation of chromosome unlinking by recombination. FtsK orienting polar sequences (KOPS) guide the direction of DNA translocation. FtsK can remove proteins from DNA as it translocates, but translocation stops specifically at XerCD-dif site, thereby preventing removal of XerC and XerD from dif. This chain is DNA translocase FtsK 1 (ftsK1), found in Neisseria meningitidis serogroup A / serotype 4A (strain DSM 15465 / Z2491).